The primary structure comprises 375 residues: Nucleolysin TIAR (375 aa).

2 RRM domains span residues 9 to 85 and 97 to 175; these read RTLY…WATT and FHVF…WATR. Lys122 carries the post-translational modification N6-acetyllysine. Ser201 is subject to Phosphoserine. Residues 205 to 277 form the RRM 3 domain; that stretch reads CTVYCGGIAS…HVVKCYWGKE (73 aa). Positions 345–375 are disordered; sequence FGAQPPQGQAPPPVIPPPNQAGYGMASYQTQ. Positions 352–363 are enriched in pro residues; the sequence is GQAPPPVIPPPN.

In terms of assembly, interacts with FASTK. In terms of processing, phosphorylated by MAPK14 following DNA damage, releasing TIAR from GADD45A mRNA. In terms of tissue distribution, expressed in brain, heart, kidney, lung and skeletal muscle.

The protein resides in the nucleus. The protein localises to the cytoplasm. It is found in the cytolytic granule. It localises to the stress granule. Its function is as follows. RNA-binding protein involved in alternative pre-RNA splicing and in cytoplasmic stress granules formation. Shows a preference for uridine-rich RNAs. Activates splicing of alternative exons with weak 5' splice sites followed by a U-rich stretch on its own pre-mRNA and on TIA1 mRNA. Promotes the inclusion of TIA1 exon 5 to give rise to the long isoform (isoform a) of TIA1. Acts downstream of the stress-induced phosphorylation of EIF2S1/EIF2A to promote the recruitment of untranslated mRNAs to cytoplasmic stress granules (SG). Possesses nucleolytic activity against cytotoxic lymphocyte target cells. May be involved in apoptosis. This chain is Nucleolysin TIAR (TIAL1), found in Homo sapiens (Human).